The chain runs to 421 residues: Leucine-rich repeat-containing protein 42 (421 aa).

LRR repeat units lie at residues 149–170 (VLCSLCLRNRYLVVAEKLEEIK), 174–195 (ELTRLDLSCCWLGDEHELLEHL), 202–222 (SVTQLHLKDNCLSDAGIRKMT), 234–255 (NLTLLDLSCNPEITDAGIGYLF), and 259–280 (KLNCLDISGTGLKDIKAVKDKL). The interval 374–406 (HEPLLSQESKKSKKRAFEESEQEQSSPQSAKQK) is disordered. Phosphoserine is present on serine 399.

The protein belongs to the LRRC42 family.

The chain is Leucine-rich repeat-containing protein 42 (Lrrc42) from Rattus norvegicus (Rat).